A 302-amino-acid chain; its full sequence is Acetylglutamate kinase (302 aa).

Substrate is bound by residues Gly68–Gly69, Arg90, and Asn194.

Belongs to the acetylglutamate kinase family. ArgB subfamily.

The protein localises to the cytoplasm. It catalyses the reaction N-acetyl-L-glutamate + ATP = N-acetyl-L-glutamyl 5-phosphate + ADP. It functions in the pathway amino-acid biosynthesis; L-arginine biosynthesis; N(2)-acetyl-L-ornithine from L-glutamate: step 2/4. Catalyzes the ATP-dependent phosphorylation of N-acetyl-L-glutamate. This chain is Acetylglutamate kinase, found in Acinetobacter baumannii (strain AB307-0294).